Reading from the N-terminus, the 112-residue chain is Protein ECM19 (112 aa).

A helical membrane pass occupies residues 35-57; it reads NTLDMVTIGIACLVGVYTGTRFF. Residues 82–112 form a disordered region; the sequence is EDGNLLKVTPSLSSTPAAPPTPPTPPTPPQQ. The segment covering 98–112 has biased composition (pro residues); the sequence is AAPPTPPTPPTPPQQ.

It localises to the mitochondrion membrane. Its function is as follows. May be involved in cell wall organization and biogenesis. This is Protein ECM19 (ECM19) from Saccharomyces cerevisiae (strain ATCC 204508 / S288c) (Baker's yeast).